Consider the following 228-residue polypeptide: Probable septum site-determining protein MinC (228 aa).

The protein belongs to the MinC family. In terms of assembly, interacts with MinD and FtsZ.

In terms of biological role, cell division inhibitor that blocks the formation of polar Z ring septums. Rapidly oscillates between the poles of the cell to destabilize FtsZ filaments that have formed before they mature into polar Z rings. Prevents FtsZ polymerization. This chain is Probable septum site-determining protein MinC, found in Bacillus cytotoxicus (strain DSM 22905 / CIP 110041 / 391-98 / NVH 391-98).